Here is a 430-residue protein sequence, read N- to C-terminus: Tol-Pal system protein TolB (430 aa).

Positions 1–21 (MKQALRVAFGFLMLWAAMLHA) are cleaved as a signal peptide.

Belongs to the TolB family. As to quaternary structure, the Tol-Pal system is composed of five core proteins: the inner membrane proteins TolA, TolQ and TolR, the periplasmic protein TolB and the outer membrane protein Pal. They form a network linking the inner and outer membranes and the peptidoglycan layer.

It localises to the periplasm. Functionally, part of the Tol-Pal system, which plays a role in outer membrane invagination during cell division and is important for maintaining outer membrane integrity. TolB occupies a key intermediary position in the Tol-Pal system because it communicates directly with both membrane-embedded components, Pal in the outer membrane and TolA in the inner membrane. The protein is Tol-Pal system protein TolB of Escherichia fergusonii (strain ATCC 35469 / DSM 13698 / CCUG 18766 / IAM 14443 / JCM 21226 / LMG 7866 / NBRC 102419 / NCTC 12128 / CDC 0568-73).